A 177-amino-acid chain; its full sequence is Large ribosomal subunit protein uL6 (177 aa).

It belongs to the universal ribosomal protein uL6 family. In terms of assembly, part of the 50S ribosomal subunit.

In terms of biological role, this protein binds to the 23S rRNA, and is important in its secondary structure. It is located near the subunit interface in the base of the L7/L12 stalk, and near the tRNA binding site of the peptidyltransferase center. This is Large ribosomal subunit protein uL6 from Variovorax paradoxus (strain S110).